Consider the following 287-residue polypeptide: ATP synthase subunit a (287 aa).

A run of 6 helical transmembrane segments spans residues 37–57 (LDSVAVSVILGVLGLFVMWLA), 96–116 (FIAPLALTVFVWIFLMNAMDL), 144–164 (DLSTTLGLSSAVLILCFVYSI), 187–207 (PVFALILGVVNLLMQIIEYVA), 224–244 (ELVFMLIALMGGAAAMSLSGV), and 266–286 (TLQAFIFMMLTLIYLGQAHEA).

The protein belongs to the ATPase A chain family. In terms of assembly, F-type ATPases have 2 components, CF(1) - the catalytic core - and CF(0) - the membrane proton channel. CF(1) has five subunits: alpha(3), beta(3), gamma(1), delta(1), epsilon(1). CF(0) has three main subunits: a(1), b(2) and c(9-12). The alpha and beta chains form an alternating ring which encloses part of the gamma chain. CF(1) is attached to CF(0) by a central stalk formed by the gamma and epsilon chains, while a peripheral stalk is formed by the delta and b chains.

It localises to the cell inner membrane. In terms of biological role, key component of the proton channel; it plays a direct role in the translocation of protons across the membrane. This is ATP synthase subunit a from Acidovorax ebreus (strain TPSY) (Diaphorobacter sp. (strain TPSY)).